The sequence spans 263 residues: Transcription factor bHLH27 (263 aa).

Residues 32–47 (EAFSGSGESSSPDGAA) are compositionally biased toward low complexity. A disordered region spans residues 32-61 (EAFSGSGESSSPDGAATSPASSKNVVSERN). The segment covering 49-58 (SPASSKNVVS) has biased composition (polar residues). The bHLH domain maps to 50 to 99 (PASSKNVVSERNRRQKLNQRLFALRSVVPNISKLDKASVIKDSIDYMQEL).

Homodimer. In terms of tissue distribution, expressed constitutively in roots, leaves, stems, and flowers.

The protein localises to the nucleus. The polypeptide is Transcription factor bHLH27 (BHLH27) (Arabidopsis thaliana (Mouse-ear cress)).